The following is a 750-amino-acid chain: Ribosomal RNA large subunit methyltransferase K/L (750 aa).

A THUMP domain is found at 46–157 (TAYRLCLWSR…RGEAILSLDL (112 aa)).

It belongs to the methyltransferase superfamily. RlmKL family.

The protein resides in the cytoplasm. The catalysed reaction is guanosine(2445) in 23S rRNA + S-adenosyl-L-methionine = N(2)-methylguanosine(2445) in 23S rRNA + S-adenosyl-L-homocysteine + H(+). It carries out the reaction guanosine(2069) in 23S rRNA + S-adenosyl-L-methionine = N(2)-methylguanosine(2069) in 23S rRNA + S-adenosyl-L-homocysteine + H(+). In terms of biological role, specifically methylates the guanine in position 2445 (m2G2445) and the guanine in position 2069 (m7G2069) of 23S rRNA. The chain is Ribosomal RNA large subunit methyltransferase K/L from Pseudomonas syringae pv. tomato (strain ATCC BAA-871 / DC3000).